The following is a 292-amino-acid chain: ATP synthase gamma chain (292 aa).

This sequence belongs to the ATPase gamma chain family. In terms of assembly, F-type ATPases have 2 components, CF(1) - the catalytic core - and CF(0) - the membrane proton channel. CF(1) has five subunits: alpha(3), beta(3), gamma(1), delta(1), epsilon(1). CF(0) has three main subunits: a, b and c.

It localises to the cell inner membrane. Produces ATP from ADP in the presence of a proton gradient across the membrane. The gamma chain is believed to be important in regulating ATPase activity and the flow of protons through the CF(0) complex. This Methylobacterium nodulans (strain LMG 21967 / CNCM I-2342 / ORS 2060) protein is ATP synthase gamma chain.